The following is a 539-amino-acid chain: Lysophospholipid acyltransferase LPEAT2 (539 aa).

Residues 93–113 form a helical membrane-spanning segment; it reads LVICLPIALIRLVLFAASLAV. The short motif at 178-183 is the HXXXXD motif element; the sequence is HVSYIE. 3 consecutive EF-hand domains span residues 426 to 455, 457 to 492, and 493 to 528; these read KRIF…VLTQ, LFKQ…TIPN, and LNKD…NPLL. Ca(2+)-binding residues include D470, D472, D474, Y476, E481, D506, D508, D510, R512, and D517.

Belongs to the 1-acyl-sn-glycerol-3-phosphate acyltransferase family.

The protein localises to the golgi apparatus membrane. It is found in the late endosome membrane. The enzyme catalyses a 1-acyl-sn-glycero-3-phosphoethanolamine + an acyl-CoA = a 1,2-diacyl-sn-glycero-3-phosphoethanolamine + CoA. It carries out the reaction a 1-acyl-sn-glycero-3-phosphocholine + an acyl-CoA = a 1,2-diacyl-sn-glycero-3-phosphocholine + CoA. The catalysed reaction is a 1-acyl-sn-glycero-3-phospho-L-serine + an acyl-CoA = a 1,2-diacyl-sn-glycero-3-phospho-L-serine + CoA. The protein operates within lipid metabolism; phospholipid metabolism. Possesses acyl-CoA-dependent lysophospholipid acyltransferase activity with a subset of lysophospholipids as substrates. Exhibits strong acylation activity on lysophosphatidylethanolamine (LPE), and lower activity on lysophosphatidylcholine (LPC) and lysophosphatidylserine (LPS). Exhibits acylation activity on both LPE and LPC. Has a preference for 18:1-LPE over 16:0-LPE as acceptor. Palmitoyl-CoA (16:0-CoA) is a better acyl donor than oleoyl-CoA (18:1-CoA). Among several different acyl-CoA species the best acyl donor is eicosanoyl-CoA (20:0-CoA). Activity is calcium-independent. Its activity is essential for maintaining adequate levels of phosphatidylethanolamine (PE), LPE and LPC in the cells, which is crucial for plant growth regulation. The chain is Lysophospholipid acyltransferase LPEAT2 from Arabidopsis thaliana (Mouse-ear cress).